Reading from the N-terminus, the 202-residue chain is Ribonuclease HII (202 aa).

Residues 12 to 201 enclose the RNase H type-2 domain; the sequence is LLIAGVDEAG…VRQLKLFIPE (190 aa). A divalent metal cation-binding residues include Asp-18, Glu-19, and Asp-110.

The protein belongs to the RNase HII family. Requires Mn(2+) as cofactor. The cofactor is Mg(2+).

The protein resides in the cytoplasm. The catalysed reaction is Endonucleolytic cleavage to 5'-phosphomonoester.. Functionally, endonuclease that specifically degrades the RNA of RNA-DNA hybrids. The polypeptide is Ribonuclease HII (Coxiella burnetii (strain CbuG_Q212) (Coxiella burnetii (strain Q212))).